The primary structure comprises 96 residues: Large ribosomal subunit protein uL23 (96 aa).

The protein belongs to the universal ribosomal protein uL23 family. In terms of assembly, part of the 50S ribosomal subunit. Contacts protein L29, and trigger factor when it is bound to the ribosome.

One of the early assembly proteins it binds 23S rRNA. One of the proteins that surrounds the polypeptide exit tunnel on the outside of the ribosome. Forms the main docking site for trigger factor binding to the ribosome. This Alkaliphilus oremlandii (strain OhILAs) (Clostridium oremlandii (strain OhILAs)) protein is Large ribosomal subunit protein uL23.